The chain runs to 265 residues: Anamorsin homolog 1 (265 aa).

Positions 1–143 (MAATAAAALA…KASWSMGSSF (143 aa)) are N-terminal SAM-like domain. Positions 144–175 (PLKKATKGLPKIQIDDDSELIDEDSLLTEDDL) are linker. 4 residues coordinate [2Fe-2S] cluster: cysteine 186, cysteine 195, cysteine 198, and cysteine 200. Positions 186-200 (CEVGATRKACKNCTC) are fe-S binding site A. [4Fe-4S] cluster-binding residues include cysteine 226, cysteine 229, cysteine 237, and cysteine 240. 2 short sequence motifs (cx2C motif) span residues 226–229 (CGNC) and 237–240 (CGTC). The interval 226–240 (CGNCGLGDAFRCGTC) is fe-S binding site B.

This sequence belongs to the anamorsin family. As to quaternary structure, monomer. The cofactor is [2Fe-2S] cluster. It depends on [4Fe-4S] cluster as a cofactor.

The protein localises to the cytoplasm. It localises to the mitochondrion intermembrane space. Component of the cytosolic iron-sulfur (Fe-S) protein assembly (CIA) machinery. Required for the maturation of extramitochondrial Fe-S proteins. Part of an electron transfer chain functioning in an early step of cytosolic Fe-S biogenesis, facilitating the de novo assembly of a [4Fe-4S] cluster on the cytosolic Fe-S scaffold complex. Electrons are transferred from NADPH via a FAD- and FMN-containing diflavin oxidoreductase. Together with the diflavin oxidoreductase, also required for the assembly of the diferric tyrosyl radical cofactor of ribonucleotide reductase (RNR), probably by providing electrons for reduction during radical cofactor maturation in the catalytic small subunit. In Oryza sativa subsp. indica (Rice), this protein is Anamorsin homolog 1.